The following is a 480-amino-acid chain: tRNA (guanine(37)-N(1))-methyltransferase (480 aa).

S-adenosyl-L-methionine-binding positions include H244, 292 to 293 (DL), 321 to 322 (DG), and N342.

The protein belongs to the class I-like SAM-binding methyltransferase superfamily. TRM5/TYW2 family. Monomer.

Its subcellular location is the mitochondrion matrix. The protein resides in the nucleus. It is found in the cytoplasm. The catalysed reaction is guanosine(37) in tRNA + S-adenosyl-L-methionine = N(1)-methylguanosine(37) in tRNA + S-adenosyl-L-homocysteine + H(+). Specifically methylates the N1 position of guanosine-37 in various cytoplasmic and mitochondrial tRNAs. Methylation is not dependent on the nature of the nucleoside 5' of the target nucleoside. This is the first step in the biosynthesis of wybutosine (yW), a modified base adjacent to the anticodon of tRNAs and required for accurate decoding. The sequence is that of tRNA (guanine(37)-N(1))-methyltransferase from Thalassiosira pseudonana (Marine diatom).